The following is a 1364-amino-acid chain: Collagen alpha-2(I) chain (1364 aa).

An N-terminal signal peptide occupies residues 1-22 (MLSFVDTRTLLLLAVTSCLATC). Glutamine 23 carries the pyrrolidone carboxylic acid modification. The propeptide at 23–79 (QSLQEATARKGPSGDRGPRGERGPPGPPGRDGDDGIPGPPGPPGPPGPPGLGGNFAA) is N-terminal propeptide. The interval 26–1128 (QEATARKGPS…QPRSPTSLRP (1103 aa)) is disordered. Positions 34 to 44 (PSGDRGPRGER) are enriched in basic and acidic residues. Residues 59–71 (PGPPGPPGPPGPP) are compositionally biased toward pro residues. Glutamine 80 is modified (pyrrolidone carboxylic acid). An Allysine modification is found at lysine 84. The segment covering 93-130 (LMGPRGPPGASGAPGPQGFQGPPGEPGEPGQTGPAGAR) has biased composition (low complexity). Proline 100, proline 106, proline 115, proline 118, proline 121, proline 133, proline 136, proline 145, proline 151, proline 166, proline 169, and proline 172 each carry 4-hydroxyproline. Basic and acidic residues predominate over residues 139-153 (AGEDGHPGKPGRPGE). Residue lysine 175 is modified to 5-hydroxylysine; alternate. Lysine 175 carries an O-linked (Gal...) hydroxylysine; alternate glycan. Residues proline 190 and proline 193 each carry the 4-hydroxyproline modification. The residue at position 196 (lysine 196) is a 5-hydroxylysine. 8 positions are modified to 4-hydroxyproline: proline 199, proline 202, proline 208, proline 217, proline 226, proline 253, proline 256, and proline 259. The span at 223–252 (VGAPGPAGARGSDGSVGPVGPAGPIGSAGP) shows a compositional bias: low complexity. Lysine 262 bears the 5-hydroxylysine mark. A 4-hydroxyproline mark is found at proline 271, proline 286, proline 295, and proline 304. Positions 277 to 291 (AGPRGEVGLPGLSGP) are enriched in low complexity. A compositionally biased stretch (low complexity) spans 298–319 (PGANGLPGAKGAAGLPGVAGAP). The residue at position 307 (lysine 307) is a 5-hydroxylysine. A 4-hydroxyproline mark is found at proline 313, proline 319, proline 322, proline 328, and proline 346. Low complexity predominate over residues 328 to 343 (PGPVGAAGATGARGLV). A 5-hydroxylysine modification is found at lysine 352. A 4-hydroxyproline mark is found at proline 361, proline 367, proline 370, proline 391, proline 394, proline 400, proline 406, proline 439, and proline 442. Over residues 396 to 406 (LRGNPGSRGLP) the composition is skewed to low complexity. Low complexity-rich tracts occupy residues 468–487 (LPGIDGRPGPIGPAGARGEP) and 511–535 (AGLAGARGAPGPDGNNGAQGPPGLQ). Residues 536–545 (GVQGGKGEQG) show a composition bias toward gly residues. Low complexity-rich tracts occupy residues 592-609 (PGESGAAGPTGPIGSRGP), 621-643 (EPGVVGAPGTAGPSGPSGLPGER), 666-688 (SPGRDGARGAPGAIGAPGPAGAN), and 715-735 (VGPAGPNGFAGPAGAAGQPGA). Residues 736-745 (KGERGTKGPK) show a composition bias toward basic and acidic residues. Residues 748-763 (NGPVGPTGPVGAAGPS) show a composition bias toward low complexity. Gly residues predominate over residues 773 to 782 (GSRGDGGPPG). Composition is skewed to low complexity over residues 783 to 793 (ATGFPGAAGRT), 861 to 874 (PQGLLGAPGFLGLP), 891 to 930 (EPGPLGIAGPPGARGPPGNVGNPGVNGAPGEAGRDGNPGN), 948 to 961 (YPGNAGPVGAAGAP), and 978 to 999 (EPGPAGAVGPAGAVGPRGPSGP). Residues 1003–1014 (RGDKGEPGDKGP) are compositionally biased toward basic and acidic residues. The segment covering 1087-1101 (AGPPGPPGPPGPPGP) has biased composition (pro residues). Positions 1118-1364 (DQPRSPTSLR…RLNIGPVCFK (247 aa)) are cleaved as a propeptide — C-terminal propeptide. The 234-residue stretch at 1131–1364 (YEVDATLKSL…RLNIGPVCFK (234 aa)) folds into the Fibrillar collagen NC1 domain. Disulfide bonds link cysteine 1161–cysteine 1193, cysteine 1201–cysteine 1362, and cysteine 1270–cysteine 1315. Ca(2+) contacts are provided by aspartate 1179, asparagine 1181, glutamine 1182, cysteine 1184, and aspartate 1187. The N-linked (GlcNAc...) asparagine glycan is linked to asparagine 1265.

It belongs to the fibrillar collagen family. In terms of assembly, trimers of one alpha 2(I) and two alpha 1(I) chains. Interacts (via C-terminus) with TMEM131 (via PapD-L domain); the interaction is direct and is involved in assembly and TRAPPIII ER-to-Golgi transport complex-dependent secretion of collagen. Prolines at the third position of the tripeptide repeating unit (G-X-Y) are hydroxylated in some or all of the chains. Forms the fibrils of tendon, ligaments and bones. In bones the fibrils are mineralized with calcium hydroxyapatite.

The protein resides in the secreted. It localises to the extracellular space. Its subcellular location is the extracellular matrix. Type I collagen is a member of group I collagen (fibrillar forming collagen). This Bos taurus (Bovine) protein is Collagen alpha-2(I) chain (COL1A2).